The sequence spans 180 residues: Shikimate kinase (180 aa).

ATP is bound at residue glycine 14–threonine 19. Residue serine 18 coordinates Mg(2+). 3 residues coordinate substrate: aspartate 36, arginine 60, and glycine 82. Position 120 (arginine 120) interacts with ATP. Arginine 140 is a substrate binding site. Glutamine 157 is a binding site for ATP.

This sequence belongs to the shikimate kinase family. Monomer. Requires Mg(2+) as cofactor.

The protein resides in the cytoplasm. The catalysed reaction is shikimate + ATP = 3-phosphoshikimate + ADP + H(+). It participates in metabolic intermediate biosynthesis; chorismate biosynthesis; chorismate from D-erythrose 4-phosphate and phosphoenolpyruvate: step 5/7. Functionally, catalyzes the specific phosphorylation of the 3-hydroxyl group of shikimic acid using ATP as a cosubstrate. This is Shikimate kinase from Haemophilus influenzae (strain PittEE).